A 642-amino-acid chain; its full sequence is Tigger transposable element-derived protein 5 (642 aa).

Composition is skewed to pro residues over residues 1 to 10 (MYPAGPPAGP) and 19 to 43 (LPGP…PGPR). A disordered region spans residues 1–45 (MYPAGPPAGPVPRRGRRPLPGPPAPAPAPVPAARPPPPAPGPRPR). Residues 47 to 98 (AVKMAFRKAYSIKDKLQAIERVKGGERQASVCRDFGVPGGTLRGWLKDEPKL) form the HTH psq-type domain. 2 consecutive DNA-binding regions (H-T-H motif) follow at residues 74-94 (QASV…WLKD) and 145-178 (PLIQ…WQKR). The region spanning 112–185 (QRKKMRLANE…QKRHGISSQR (74 aa)) is the HTH CENPB-type domain. Positions 185–233 (RFYGEAGPPAPSPAPGPPVKEEPALPSGAGPLPDRAPAPPPPAEGGYGD) are disordered. 2 stretches are compositionally biased toward pro residues: residues 192-202 (PPAPSPAPGPP) and 218-227 (DRAPAPPPPA). DDE-1 domains follow at residues 233–357 (DEQI…VLLV) and 410–477 (RAHI…ERCW). The segment at 535–587 (LDDDGGPPEGCREEVGPALPPAAPPAPASLPSAMGGGEDEEEATDYGGTSVPT) is disordered. The span at 552–562 (ALPPAAPPAPA) shows a compositional bias: pro residues.

The protein belongs to the tigger transposable element derived protein family.

Its subcellular location is the nucleus. The sequence is that of Tigger transposable element-derived protein 5 (TIGD5) from Homo sapiens (Human).